The primary structure comprises 435 residues: Exodeoxyribonuclease 7 large subunit (435 aa).

Polar residues predominate over residues 1–10 (MRGTRVTETA). 2 disordered regions span residues 1–21 (MRGT…GPPT) and 413–435 (AGKA…PRGK).

Belongs to the XseA family. In terms of assembly, heterooligomer composed of large and small subunits.

It localises to the cytoplasm. It carries out the reaction Exonucleolytic cleavage in either 5'- to 3'- or 3'- to 5'-direction to yield nucleoside 5'-phosphates.. Its function is as follows. Bidirectionally degrades single-stranded DNA into large acid-insoluble oligonucleotides, which are then degraded further into small acid-soluble oligonucleotides. The sequence is that of Exodeoxyribonuclease 7 large subunit from Leifsonia xyli subsp. xyli (strain CTCB07).